The sequence spans 331 residues: Protein REVEILLE 6 (331 aa).

The 55-residue stretch at 67 to 121 folds into the HTH myb-type domain; that stretch reads TITKSRESWTEPEHDKFLEALQLFDRDWKKIEAFIGSKTVIQIRSHAQKYFLKVQ. Positions 94–117 form a DNA-binding region, H-T-H motif; it reads WKKIEAFIGSKTVIQIRSHAQKYF. Disordered regions lie at residues 122 to 166, 203 to 237, and 309 to 331; these read KSGT…EPND, LPKA…GNVG, and SETA…EIST. Polar residues predominate over residues 150–165; the sequence is VQLQVPGSFKSTSEPN. Low complexity predominate over residues 211–220; it reads NNNCSSSSEN. 2 stretches are compositionally biased toward basic and acidic residues: residues 226 to 235 and 322 to 331; these read SNRDARDHGN and LNKDPPEIST.

Its subcellular location is the nucleus. Its function is as follows. Probable transcription factor. RVE4, RVE6 and RVE8 are components of the circadian system acting synergistically to regulate flowering time, redundantly to regulate leaf growth, and antagonistically to regulate hypocotyl elongation; their action seems independent of ZTL and HY5. The sequence is that of Protein REVEILLE 6 from Arabidopsis thaliana (Mouse-ear cress).